A 424-amino-acid polypeptide reads, in one-letter code: Trigger factor (424 aa).

The PPIase FKBP-type domain maps to Gly-163 to Pro-248.

This sequence belongs to the FKBP-type PPIase family. Tig subfamily.

It is found in the cytoplasm. It catalyses the reaction [protein]-peptidylproline (omega=180) = [protein]-peptidylproline (omega=0). In terms of biological role, involved in protein export. Acts as a chaperone by maintaining the newly synthesized protein in an open conformation. Functions as a peptidyl-prolyl cis-trans isomerase. The polypeptide is Trigger factor (Bacillus pumilus (strain SAFR-032)).